We begin with the raw amino-acid sequence, 226 residues long: MEHRVFTIANFFSSNHDFITGFFVVLTAVLMFLISLGASRKMQMVPMGLQNVYESIISAILSVAKDIIGEELARKYFPLAGTIALYVFFSNMIGIIPGFESPTASWSFTLVLALIVFFYYHFEGIRVQGFFKYFAHFAGPVKWLAPFMFPIEIISHFSRIVSLSFRLFGNIKGDDMFLLIMLLLVPWAVPVAPFMVLFFMGILQAFVFMILTYVYLAGAVLTDEGH.

Helical transmembrane passes span 18–38 (FITG…SLGA), 79–99 (LAGT…IPGF), 105–125 (SWSF…FEGI), 134–154 (FAHF…IEII), 179–199 (LIML…VLFF), and 201–221 (GILQ…GAVL).

This sequence belongs to the ATPase A chain family. As to quaternary structure, F-type ATPases have 2 components, CF(1) - the catalytic core - and CF(0) - the membrane proton channel. CF(1) has five subunits: alpha(3), beta(3), gamma(1), delta(1), epsilon(1). CF(0) has three main subunits: a(1), b(2) and c(9-12). The alpha and beta chains form an alternating ring which encloses part of the gamma chain. CF(1) is attached to CF(0) by a central stalk formed by the gamma and epsilon chains, while a peripheral stalk is formed by the delta and b chains.

The protein resides in the cell inner membrane. In terms of biological role, key component of the proton channel; it plays a direct role in the translocation of protons across the membrane. The protein is ATP synthase subunit a of Helicobacter pylori (strain HPAG1).